Reading from the N-terminus, the 464-residue chain is Tryprostatin B synthase (464 aa).

Residues M94 and E102 each contribute to the brevianamide F site. Residues R113, K201, and Y203 each contribute to the dimethylallyl diphosphate site. Y205 lines the brevianamide F pocket. Dimethylallyl diphosphate is bound by residues K294, Y296, Q380, Y382, Y446, and Y450.

It belongs to the tryptophan dimethylallyltransferase family.

The catalysed reaction is brevianamide F + dimethylallyl diphosphate = tryprostatin B + diphosphate. Its pathway is mycotoxin biosynthesis. In terms of biological role, brevianamide F prenyltransferase; part of the gene cluster that mediates the biosynthesis of fumitremorgins, indole alkaloids that carry not only intriguing chemical structures, but also interesting biological and pharmacological activities. The biosynthesis of fumitremorgin-type alkaloids begins by condensation of the two amino acids L-tryptophan and L-proline to brevianamide F, catalyzed by the non-ribosomal peptide synthetase ftmA. Brevianamide F is then prenylated by the prenyltransferase ftmPT1/ftmB in the presence of dimethylallyl diphosphate, resulting in the formation of tryprostatin B. The three cytochrome P450 monooxygenases, ftmP450-1/ftmC, ftmP450-2/ftmE and ftmP450-3/FtmG, are responsible for the conversion of tryprostatin B to 6-hydroxytryprostatin B, tryprostatin A to fumitremorgin C and fumitremorgin C to 12,13-dihydroxyfumitremorgin C, respectively. The putative methyltransferase ftmMT/ftmD is expected for the conversion of 6-hydroxytryprostatin B to tryprostatin A. FtmPT2/FtmH catalyzes the prenylation of 12,13-dihydroxyfumitre-morgin C in the presence of dimethylallyl diphosphate, resulting in the formation of fumitremorgin B. Fumitremorgin B is further converted to verruculogen by ftmOx1/ftmF via the insertion of an endoperoxide bond between the two prenyl moieties. In some fungal species, verruculogen is further converted to fumitremorgin A, but the enzymes involved in this step have not been identified yet. This Aspergillus fumigatus (Neosartorya fumigata) protein is Tryprostatin B synthase.